Here is a 541-residue protein sequence, read N- to C-terminus: MAPLPAAATATASSAATPADDEAHSLLPSTPSNEEDDDDLEERAYEATEKVIVSISDFPDADDDEEESGLATSTAASGIPPFSWRKLWLFTGPGFLMSIAFLDPGNLEGDLQAGAVAGDTLLWLLLWATSMGLLVQLLAARVGVATGRHLAELCRDEYPSWARRALWLMAEVAMVGADIQEVIGSAIAIKILSRGFLPLWAGVVITALDCFIFLSLENYGVRKLEAVFAILIATMAVSFAWMFTDTKPNMKNLFIGILVPKLSSRTIRQAVGVVGCVIMPHNVFLHSALVQSRKIDPNKEHQVREALRYYSIESTIALAVSFMINLFVTTVFAKGFYGTKEAGNIGLENAGQYLQEKFGGGFFPILYIWGIGLLAAGQSSTITGTYAGQFIMGGFLNLKLKKWIRSLITRSFAIVPTIIVALFFDKSDSLDVLNEWLNVLQSIQIPFALIPLITLVSKEKVMGVFKIGRNTQAVTWTVATLLITINGYLLLDFFSSEIRGLLSGSILCVAVLAYASFVLYLILRGTELPNQIITTIRKSFS.

Low complexity predominate over residues 1–18 (MAPLPAAATATASSAATP). The interval 1–44 (MAPLPAAATATASSAATPADDEAHSLLPSTPSNEEDDDDLEERA) is disordered. Helical transmembrane passes span 87-107 (LWLF…PGNL), 120-140 (TLLW…LLAA), 172-192 (VAMV…IKIL), 196-216 (FLPL…FLSL), 224-244 (LEAV…WMFT), 270-290 (AVGV…SALV), 316-336 (IALA…AKGF), 358-378 (FGGG…AAGQ), 404-424 (IRSL…ALFF), 436-456 (WLNV…ITLV), 474-494 (VTWT…LDFF), and 502-522 (LSGS…LYLI).

This sequence belongs to the NRAMP (TC 2.A.55) family.

Its subcellular location is the membrane. Functionally, probable metal transporter. This is Metal transporter Nramp6 (NRAMP6) from Oryza sativa subsp. japonica (Rice).